A 313-amino-acid polypeptide reads, in one-letter code: Desiccation-related protein PCC13-62 (313 aa).

The N-terminal stretch at M1–A26 is a signal peptide.

The chain is Desiccation-related protein PCC13-62 from Craterostigma plantagineum (Blue gem).